The sequence spans 126 residues: Histone H2B type 1-M (126 aa).

The segment at 1-36 (MPEPVKSAPVPKKGSKKAINKAQKKDGKKRKRSRKE) is disordered. At Pro2 the chain carries N-acetylproline. Position 3 is an ADP-ribosyl glutamic acid (Glu3). At Lys6 the chain carries N6-(2-hydroxyisobutyryl)lysine; alternate. Lys6 carries the N6-(beta-hydroxybutyryl)lysine; alternate modification. Lys6 carries the post-translational modification N6-acetyllysine; alternate. The residue at position 6 (Lys6) is an N6-butyryllysine; alternate. The residue at position 6 (Lys6) is an N6-crotonyllysine; alternate. Lys6 bears the N6-lactoyllysine; alternate mark. Lys6 participates in a covalent cross-link: Glycyl lysine isopeptide (Lys-Gly) (interchain with G-Cter in SUMO2); alternate. Ser7 bears the ADP-ribosylserine mark. Lys12 is modified (N6-(beta-hydroxybutyryl)lysine; alternate). An N6-acetyllysine; alternate mark is found at Lys12 and Lys13. Residues Lys12 and Lys13 each carry the N6-crotonyllysine; alternate modification. Lys12 carries the N6-lactoyllysine; alternate modification. Lys13 carries the N6-(2-hydroxyisobutyryl)lysine; alternate modification. Ser15 is modified (phosphoserine; by STK4/MST1). Residues Lys16, Lys17, Lys21, and Lys24 each carry the N6-acetyllysine; alternate modification. 4 positions are modified to N6-crotonyllysine; alternate: Lys16, Lys17, Lys21, and Lys24. 4 positions are modified to N6-lactoyllysine; alternate: Lys16, Lys17, Lys21, and Lys24. 2 positions are modified to N6-(beta-hydroxybutyryl)lysine; alternate: Lys17 and Lys21. At Lys17 the chain carries N6-glutaryllysine; alternate. An N6-(2-hydroxyisobutyryl)lysine; alternate mark is found at Lys21 and Lys24. Position 21 is an N6-butyryllysine; alternate (Lys21). Lys21 participates in a covalent cross-link: Glycyl lysine isopeptide (Lys-Gly) (interchain with G-Cter in SUMO2); alternate. Lys25 bears the N6-(2-hydroxyisobutyryl)lysine mark. Residue Lys35 is modified to N6-(2-hydroxyisobutyryl)lysine; alternate. Lys35 carries the N6-(beta-hydroxybutyryl)lysine; alternate modification. Residue Lys35 is modified to N6-crotonyllysine; alternate. Lys35 is subject to N6-glutaryllysine; alternate. Lys35 carries the N6-succinyllysine; alternate modification. Lys35 participates in a covalent cross-link: Glycyl lysine isopeptide (Lys-Gly) (interchain with G-Cter in ubiquitin); alternate. Residue Glu36 is modified to PolyADP-ribosyl glutamic acid. The residue at position 37 (Ser37) is a Phosphoserine; by AMPK. Residues Lys44, Lys47, and Lys58 each carry the N6-(2-hydroxyisobutyryl)lysine; alternate modification. The residue at position 44 (Lys44) is an N6-lactoyllysine; alternate. N6-glutaryllysine; alternate is present on residues Lys44 and Lys47. At Lys47 the chain carries N6-methyllysine; alternate. An N6,N6-dimethyllysine; alternate modification is found at Lys58. Position 80 is a dimethylated arginine (Arg80). Lys86 bears the N6-(2-hydroxyisobutyryl)lysine; alternate mark. Lys86 carries the post-translational modification N6-(beta-hydroxybutyryl)lysine; alternate. Lys86 carries the post-translational modification N6-acetyllysine; alternate. Lys86 bears the N6-lactoyllysine; alternate mark. An N6,N6,N6-trimethyllysine; alternate modification is found at Lys86. An omega-N-methylarginine mark is found at Arg87 and Arg93. The residue at position 109 (Lys109) is an N6-(2-hydroxyisobutyryl)lysine; alternate. Lys109 carries the N6-lactoyllysine; alternate modification. Position 109 is an N6-glutaryllysine; alternate (Lys109). Lys109 carries the post-translational modification N6-methyllysine; alternate. Ser113 carries O-linked (GlcNAc) serine glycosylation. Thr116 is modified (phosphothreonine). Residues Lys117 and Lys121 each carry the N6-(2-hydroxyisobutyryl)lysine; alternate modification. Residues Lys117 and Lys121 each carry the N6-(beta-hydroxybutyryl)lysine; alternate modification. N6-lactoyllysine; alternate is present on residues Lys117 and Lys121. An N6-glutaryllysine; alternate mark is found at Lys117 and Lys121. N6-succinyllysine; alternate is present on residues Lys117 and Lys121. Lys117 is modified (N6-malonyllysine; alternate). Lys117 is subject to N6-methylated lysine; alternate. Lys121 participates in a covalent cross-link: Glycyl lysine isopeptide (Lys-Gly) (interchain with G-Cter in ubiquitin); alternate.

Belongs to the histone H2B family. The nucleosome is a histone octamer containing two molecules each of H2A, H2B, H3 and H4 assembled in one H3-H4 heterotetramer and two H2A-H2B heterodimers. The octamer wraps approximately 147 bp of DNA. Monoubiquitination at Lys-35 (H2BK34Ub) by the MSL1/MSL2 dimer is required for histone H3 'Lys-4' (H3K4me) and 'Lys-79' (H3K79me) methylation and transcription activation at specific gene loci, such as HOXA9 and MEIS1 loci. Similarly, monoubiquitination at Lys-121 (H2BK120Ub) by the RNF20/40 complex gives a specific tag for epigenetic transcriptional activation and is also prerequisite for histone H3 'Lys-4' and 'Lys-79' methylation. It also functions cooperatively with the FACT dimer to stimulate elongation by RNA polymerase II. H2BK120Ub also acts as a regulator of mRNA splicing: deubiquitination by USP49 is required for efficient cotranscriptional splicing of a large set of exons. Post-translationally, phosphorylation at Ser-37 (H2BS36ph) by AMPK in response to stress promotes transcription. Phosphorylated on Ser-15 (H2BS14ph) by STK4/MST1 during apoptosis; which facilitates apoptotic chromatin condensation. Also phosphorylated on Ser-15 in response to DNA double strand breaks (DSBs), and in correlation with somatic hypermutation and immunoglobulin class-switch recombination. In terms of processing, glcNAcylation at Ser-113 promotes monoubiquitination of Lys-121. It fluctuates in response to extracellular glucose, and associates with transcribed genes. ADP-ribosylated by PARP1 or PARP2 on Ser-7 (H2BS6ADPr) in response to DNA damage. H2BS6ADPr promotes recruitment of CHD1L. Mono-ADP-ribosylated on Glu-3 (H2BE2ADPr) by PARP3 in response to single-strand breaks. Poly ADP-ribosylation on Glu-36 (H2BE35ADPr) by PARP1 regulates adipogenesis: it inhibits phosphorylation at Ser-37 (H2BS36ph), thereby blocking expression of pro-adipogenetic genes. Post-translationally, crotonylation (Kcr) is specifically present in male germ cells and marks testis-specific genes in post-meiotic cells, including X-linked genes that escape sex chromosome inactivation in haploid cells. Crotonylation marks active promoters and enhancers and confers resistance to transcriptional repressors. It is also associated with post-meiotically activated genes on autosomes. In terms of processing, lactylated in macrophages by EP300/P300 by using lactoyl-CoA directly derived from endogenous or exogenous lactate, leading to stimulates gene transcription.

It is found in the nucleus. Its subcellular location is the chromosome. Core component of nucleosome. Nucleosomes wrap and compact DNA into chromatin, limiting DNA accessibility to the cellular machineries which require DNA as a template. Histones thereby play a central role in transcription regulation, DNA repair, DNA replication and chromosomal stability. DNA accessibility is regulated via a complex set of post-translational modifications of histones, also called histone code, and nucleosome remodeling. The polypeptide is Histone H2B type 1-M (Homo sapiens (Human)).